The primary structure comprises 353 residues: Putative ABC transporter ATP-binding protein MG303 homolog (353 aa).

Positions 72-312 constitute an ABC transporter domain; it reads LYFYNLSVFV…MQLLQRYEIT (241 aa). 107 to 114 is a binding site for ATP; sequence GPSGSGKT.

Belongs to the ABC transporter superfamily.

The chain is Putative ABC transporter ATP-binding protein MG303 homolog from Mycoplasma pneumoniae (strain ATCC 29342 / M129 / Subtype 1) (Mycoplasmoides pneumoniae).